Consider the following 315-residue polypeptide: Protein-methionine-sulfoxide reductase catalytic subunit MsrP (315 aa).

A signal peptide (tat-type signal) is located at residues 1-45 (MPSYRPPKIASSEITPRQVYLRRREFLGAATLGAMALYGAGKASA). Mo-molybdopterin contacts are provided by residues N71, 74-75 (YE), C129, T164, N214, R219, and 230-232 (GIK).

Belongs to the MsrP family. As to quaternary structure, heterodimer of a catalytic subunit (MsrP) and a heme-binding subunit (MsrQ). The cofactor is Mo-molybdopterin. Post-translationally, predicted to be exported by the Tat system. The position of the signal peptide cleavage has not been experimentally proven.

The protein resides in the periplasm. The catalysed reaction is L-methionyl-[protein] + a quinone + H2O = L-methionyl-(S)-S-oxide-[protein] + a quinol. It carries out the reaction L-methionyl-[protein] + a quinone + H2O = L-methionyl-(R)-S-oxide-[protein] + a quinol. In terms of biological role, part of the MsrPQ system that repairs oxidized periplasmic proteins containing methionine sulfoxide residues (Met-O), using respiratory chain electrons. Thus protects these proteins from oxidative-stress damage caused by reactive species of oxygen and chlorine generated by the host defense mechanisms. MsrPQ is essential for the maintenance of envelope integrity under bleach stress, rescuing a wide series of structurally unrelated periplasmic proteins from methionine oxidation. The catalytic subunit MsrP is non-stereospecific, being able to reduce both (R-) and (S-) diastereoisomers of methionine sulfoxide. This is Protein-methionine-sulfoxide reductase catalytic subunit MsrP from Rhizobium etli (strain ATCC 51251 / DSM 11541 / JCM 21823 / NBRC 15573 / CFN 42).